We begin with the raw amino-acid sequence, 398 residues long: Set1 complex component swd1 (398 aa).

WD repeat units lie at residues 22-61 (LKHG…VSRV), 64-103 (GHTR…IVYQ), 162-202 (NRSK…IRSS), 247-295 (KFQD…KILE), and 296-336 (GPKE…SWSA).

As to quaternary structure, component of the Set1 complex composed of ash2, sdc1, set1, shg1, spp1, swd1, swd2 and swd3.

It localises to the nucleus. Its function is as follows. The Set1 complex specifically methylates 'Lys-4' of histone H3. The chain is Set1 complex component swd1 (swd1) from Schizosaccharomyces pombe (strain 972 / ATCC 24843) (Fission yeast).